The primary structure comprises 386 residues: Homeobox protein Hox-A13 (386 aa).

Positions 320 to 379 (GRKKRVPYTKVQLKELEREYATNKFITKDKRRRISATTNLSERQVTIWFQNRRVKEKKVI) form a DNA-binding region, homeobox.

This sequence belongs to the Abd-B homeobox family. As to quaternary structure, binds DNA as a homodimer. Interacts with MEIS1, MEIS2 and MEIS3.

It is found in the nucleus. Sequence-specific, AT-rich binding transcription factor which is part of a developmental regulatory system that provides cells with specific positional identities on the anterior-posterior axis. This Mus musculus (Mouse) protein is Homeobox protein Hox-A13 (Hoxa13).